The following is a 695-amino-acid chain: RING finger protein 145 (695 aa).

Transmembrane regions (helical) follow at residues 53–73 (YLAL…LTLP), 77–97 (LAKL…HQIS), 123–143 (FITA…VMKT), 146–166 (IWLF…IPIE), 168–188 (IVVI…YFLA), 225–245 (LVVP…QIYT), 275–295 (YSLL…LTLC), 316–336 (TEGV…LQVV), 340–360 (FLLS…MLEI), 384–404 (SLCL…CQFF), 410–430 (LLII…TLFV), 460–480 (LLEF…TVFG), and 482–502 (WTVM…WLRA). The RING-type; atypical zinc finger occupies 537–575 (CSICYQDMNSAVITPCSHFFHPGCLKKWLYVQETCPLCH). A compositionally biased stretch (polar residues) spans 589 to 604 (SGSSTNPVVEQSANNP). Residues 589-608 (SGSSTNPVVEQSANNPPQEP) are disordered.

Its subcellular location is the membrane. This chain is RING finger protein 145 (rnf145), found in Xenopus laevis (African clawed frog).